Here is a 280-residue protein sequence, read N- to C-terminus: MQVGCHVSISGGIDRSVDNAVERGCTAFQIFSRNPRGWRAKEISKDEAGTFKKKLKESKIEPSGTCVHMPYLPNLASTNDESHKKSVDTLIGEVERCGLLGIPFLVTHLGSHLGAGEEKGIERLVKAYKSAAGVKNGVTILLENTAGQKNSVGSEFGQLGSILSQLRPAKRFGVCLDTCHAFAYGYDLSTRAGAKKSFDEFDKKVGLDNLRVLHLNDAKAGCGSKLDRHYHVGLGSIGKEGMRAAARLASKRGIPMVVETPVDETRDDVGNIKAARALAG.

Residues H68, H108, E143, D177, H180, H214, D227, H229, and E259 each coordinate Zn(2+).

Belongs to the AP endonuclease 2 family. It depends on Zn(2+) as a cofactor.

It carries out the reaction Endonucleolytic cleavage to 5'-phosphooligonucleotide end-products.. Its function is as follows. Endonuclease IV plays a role in DNA repair. It cleaves phosphodiester bonds at apurinic or apyrimidinic (AP) sites, generating a 3'-hydroxyl group and a 5'-terminal sugar phosphate. This Cenarchaeum symbiosum (strain A) protein is Probable endonuclease 4.